The chain runs to 487 residues: Cytochrome P450 720B2 (487 aa).

The chain crosses the membrane as a helical span at residues 14-34 (WLVGLLCLVLGFLLLQLYKLV). C436 lines the heme pocket.

The protein belongs to the cytochrome P450 family. The cofactor is heme.

Its subcellular location is the membrane. In Pinus taeda (Loblolly pine), this protein is Cytochrome P450 720B2 (CYP720B2).